A 285-amino-acid chain; its full sequence is Shikimate dehydrogenase (NADP(+)) (285 aa).

Residues 22–24 and threonine 71 contribute to the shikimate site; that span reads SRS. Lysine 75 (proton acceptor) is an active-site residue. The shikimate site is built by asparagine 96 and aspartate 111. NADP(+) contacts are provided by residues 136–140, 160–165, and isoleucine 225; these read GAGGA and NRTVGR. Residue tyrosine 227 participates in shikimate binding. Position 248 (glycine 248) interacts with NADP(+).

Belongs to the shikimate dehydrogenase family. In terms of assembly, homodimer.

It carries out the reaction shikimate + NADP(+) = 3-dehydroshikimate + NADPH + H(+). It participates in metabolic intermediate biosynthesis; chorismate biosynthesis; chorismate from D-erythrose 4-phosphate and phosphoenolpyruvate: step 4/7. Involved in the biosynthesis of the chorismate, which leads to the biosynthesis of aromatic amino acids. Catalyzes the reversible NADPH linked reduction of 3-dehydroshikimate (DHSA) to yield shikimate (SA). In Rhizobium etli (strain CIAT 652), this protein is Shikimate dehydrogenase (NADP(+)).